The chain runs to 343 residues: Cytoplasmic tRNA 2-thiolation protein 1 (343 aa).

It belongs to the TtcA family. CTU1/NCS6/ATPBD3 subfamily.

Its subcellular location is the cytoplasm. It participates in tRNA modification; 5-methoxycarbonylmethyl-2-thiouridine-tRNA biosynthesis. Plays a central role in 2-thiolation of mcm(5)S(2)U at tRNA wobble positions of tRNA(Lys), tRNA(Glu) and tRNA(Gln). Directly binds tRNAs and probably acts by catalyzing adenylation of tRNAs, an intermediate required for 2-thiolation. It is unclear whether it acts as a sulfurtransferase that transfers sulfur from thiocarboxylated URM1 onto the uridine of tRNAs at wobble position. The sequence is that of Cytoplasmic tRNA 2-thiolation protein 1 from Drosophila pseudoobscura pseudoobscura (Fruit fly).